The chain runs to 870 residues: Radial spoke head 10 homolog B (870 aa).

Positions 1-16 are enriched in basic and acidic residues; sequence MVKEKKKADKKGEKSA. The tract at residues 1-43 is disordered; that stretch reads MVKEKKKADKKGEKSARSPSSLSDNLDFSKQDGNTTRQEMSPA. Polar residues predominate over residues 17-39; sequence RSPSSLSDNLDFSKQDGNTTRQE. MORN repeat units follow at residues 86 to 108, 109 to 131, 132 to 154, 155 to 177, 179 to 201, 204 to 226, 227 to 249, 251 to 273, 284 to 306, and 307 to 329; these read YEGEKVRGLYEGEGFAAFQGGCT, YRGMFSEGLMHGQGTYIWADGLK, YEGDFVKNVPMNHGVYTWPDGSM, YEGEVVNGMRNGFGMFKCSTQPV, YIGHWCNGKRHGKGSIYYNQEGT, YEGDWVQNIKKGWGIRCYKSGNI, YEGQWEDNMRHGEGRMRWLTTNE, YTGRWERGIQNGFGTHTWFLKRI, YIGEFVNGYRHGRGKFYYASGAM, and YDGEWVSNKKHGMGRLTFKNGRV. The tract at residues 674–704 is disordered; the sequence is NKSPSAVMSHESDAAHSDSARSSSSKLELSP. Positions 683-692 are enriched in basic and acidic residues; sequence HESDAAHSDS. Low complexity predominate over residues 693 to 703; that stretch reads ARSSSSKLELS. The stretch at 784–811 forms a coiled coil; that stretch reads KEKIRADRLRSTAQAQQRKMEDDELEAR. Positions 840–870 are disordered; it reads VSSSHLILDPPKEDVTVSPSSKTITSKKKKK.

As to quaternary structure, interacts with RSPH6A. Does not appear to be part of the axonemal radial spoke complexes 1 or 2.

The protein resides in the cytoplasm. Its subcellular location is the cytoskeleton. It is found in the cilium axoneme. The protein localises to the cell projection. It localises to the cilium. The protein resides in the flagellum. May function as part of the axonemal radial spoke complex 3 (RS3). Radial spoke complexes are important for ciliary motility. The chain is Radial spoke head 10 homolog B (RSPH10B) from Homo sapiens (Human).